Reading from the N-terminus, the 380-residue chain is tRNA-specific 2-thiouridylase MnmA (380 aa).

ATP is bound by residues 14 to 21 (GLSGGVDS) and Met40. The segment at 100-102 (NPD) is interaction with target base in tRNA. Cys105 serves as the catalytic Nucleophile. An intrachain disulfide couples Cys105 to Cys203. An ATP-binding site is contributed by Gly129. Positions 153–155 (KDQ) are interaction with tRNA. Cys203 acts as the Cysteine persulfide intermediate in catalysis. An interaction with tRNA region spans residues 322 to 323 (RY).

This sequence belongs to the MnmA/TRMU family.

It localises to the cytoplasm. It catalyses the reaction S-sulfanyl-L-cysteinyl-[protein] + uridine(34) in tRNA + AH2 + ATP = 2-thiouridine(34) in tRNA + L-cysteinyl-[protein] + A + AMP + diphosphate + H(+). Functionally, catalyzes the 2-thiolation of uridine at the wobble position (U34) of tRNA, leading to the formation of s(2)U34. The protein is tRNA-specific 2-thiouridylase MnmA of Leptothrix cholodnii (strain ATCC 51168 / LMG 8142 / SP-6) (Leptothrix discophora (strain SP-6)).